We begin with the raw amino-acid sequence, 107 residues long: Large ribosomal subunit protein uL24 (107 aa).

Belongs to the universal ribosomal protein uL24 family. As to quaternary structure, part of the 50S ribosomal subunit.

Its function is as follows. One of two assembly initiator proteins, it binds directly to the 5'-end of the 23S rRNA, where it nucleates assembly of the 50S subunit. In terms of biological role, one of the proteins that surrounds the polypeptide exit tunnel on the outside of the subunit. This Mycobacterium ulcerans (strain Agy99) protein is Large ribosomal subunit protein uL24.